Reading from the N-terminus, the 362-residue chain is Cap-specific mRNA (nucleoside-2'-O-)-methyltransferase 1 (362 aa).

The RrmJ-type SAM-dependent 2'-O-MTase domain maps to Ser87 to Leu294. Positions 130 and 207 each coordinate S-adenosyl-L-methionine. Lys248 serves as the catalytic Proton acceptor.

It is found in the nucleus. The catalysed reaction is a 5'-end (N(7)-methyl 5'-triphosphoguanosine)-ribonucleoside in mRNA + S-adenosyl-L-methionine = a 5'-end (N(7)-methyl 5'-triphosphoguanosine)-(2'-O-methyl-ribonucleoside) in mRNA + S-adenosyl-L-homocysteine + H(+). S-adenosyl-L-methionine-dependent methyltransferase that mediates RNA cap1 2'-O-ribose methylation to the 5'-cap structure of spliced leader and U1 small nuclear RNAs. Methylates the ribose of the first nucleotide of a m(7)GpppG-capped RNA to produce m(7)GpppNmp (cap1). Cap1 modification is linked to higher levels of translation. Recognizes a guanosine cap on RNA independent of its N(7) methylation status. In Trypanosoma cruzi (strain CL Brener), this protein is Cap-specific mRNA (nucleoside-2'-O-)-methyltransferase 1.